The following is a 616-amino-acid chain: Chaperone protein DnaK (616 aa).

Residue threonine 174 is modified to Phosphothreonine; by autocatalysis. The tract at residues 575 to 616 is disordered; sequence QQTQGAQSDPGAAGFGGQQEAPGAGQDENVVDADYKVVDDDK. The span at 607–616 shows a compositional bias: basic and acidic residues; it reads ADYKVVDDDK.

The protein belongs to the heat shock protein 70 family.

Its function is as follows. Acts as a chaperone. The sequence is that of Chaperone protein DnaK from Ruminiclostridium cellulolyticum (strain ATCC 35319 / DSM 5812 / JCM 6584 / H10) (Clostridium cellulolyticum).